The primary structure comprises 799 residues: Oligopeptide transporter 1 (799 aa).

Disordered regions lie at residues 1 to 26 (MSTI…PIQI) and 43 to 64 (DVNN…QKFD). The Extracellular portion of the chain corresponds to 1 to 108 (MSTIYRESDS…DPTIRLNHWR (108 aa)). The segment covering 13-26 (SEPSPTPTTIPIQI) has biased composition (low complexity). The N-linked (GlcNAc...) asparagine glycan is linked to N46. Residues T48, T50, and T51 each carry the phosphothreonine modification. A helical membrane pass occupies residues 109–129 (TWFLTTVFVVVFAGVNQFFSL). Topologically, residues 130–135 (RYPSLE) are cytoplasmic. Residues 136–156 (INFLVAQVVCYPIGRILALLP) form a helical membrane-spanning segment. Residues 157–177 (DWKCSKVPFFDLNPGPFTKKE) lie on the Extracellular side of the membrane. A helical membrane pass occupies residues 178 to 198 (HAVVTIAVALTSSTAYAMYIL). Over 199-210 (NAQGSFYNMKLN) the chain is Cytoplasmic. The chain crosses the membrane as a helical span at residues 211 to 231 (VGYQFLLVWTSQMIGYGAAGL). The Extracellular segment spans residues 232–276 (TRRWVVNPASSIWPQTLISVSLFDSLHSRKVEKTVANGWTMPRYR). Residues 277 to 297 (FFLIVLIGSFIWYWVPGFLFT) traverse the membrane as a helical segment. Residues 298 to 313 (GLSYFNVILWGSKTRH) are Cytoplasmic-facing. A helical transmembrane segment spans residues 314–334 (NFIANTIFGTQSGLGALPITF). Topologically, residues 335–359 (DYTQVSQAMSGSVFATPFYVSANTY) are extracellular. A helical transmembrane segment spans residues 360–380 (ASVLIFFVIVLPCLYFTNTWY). The Cytoplasmic portion of the chain corresponds to 381–428 (AKYMPVISGSTYDNTQNKYNVTKILNEDYSINLEKYKEYSPVFVPFSY). The chain crosses the membrane as a helical span at residues 429 to 449 (LLSYALNFAAVIAVFVHCILY). The Extracellular portion of the chain corresponds to 450 to 482 (HGKDIVAKFKDRKNGGTDIHMRIYSKNYKDCPD). A helical transmembrane segment spans residues 483–503 (WWYLLLQIVMIGLGFVAVCCF). Over 504–508 (DTKFP) the chain is Cytoplasmic. Residues 509-529 (AWAFVIAILISLVNFIPQGIL) form a helical membrane-spanning segment. Residues 530 to 540 (EAMTNQHVGLN) are Extracellular-facing. The chain crosses the membrane as a helical span at residues 541–561 (IITELICGYMLPLRPMANLLF). The Cytoplasmic portion of the chain corresponds to 562-590 (KLYGFIVMRQGLNLSRDLKLAMYMKVSPR). A helical membrane pass occupies residues 591–611 (LIFAVQIYATIISGMVNVGVQ). Topologically, residues 612–659 (EWMMHNIDGLCTTDQPNGFTCANGRTVFNASIIWSLPKYLFSSGRIYN) are extracellular. N-linked (GlcNAc...) asparagine glycosylation occurs at N640. Residues 660–680 (PLMWFFLIGLLFPLAVYAVQW) traverse the membrane as a helical segment. Over 681–736 (KFPKFKFAKHIHTPVFFTGPGNIPPSTPYNYSLFFAMSFCLNLIRKRWRAWFNKYN) the chain is Cytoplasmic. Residues 737–757 (FVMGAGVEAGVAISVVIIFLC) form a helical membrane-spanning segment. At 758–799 (VQYPGGKLSWWGNNVWKRTYDNDYKKFYTLKKGETFGYDKWW) the chain is on the extracellular side.

The protein belongs to the oligopeptide OPT transporter family.

It localises to the cell membrane. In terms of biological role, high affinity transporter for glutathione. Also transports tetra- and pentapeptides like the opioids leucine enkephalin (Tyr-Gly-Gly-Phe-Leu) and methionine enkephalin (Tyr-Gly-Gly_Phe-Met) across the cell membrane. The chain is Oligopeptide transporter 1 (OPT1) from Saccharomyces cerevisiae (strain ATCC 204508 / S288c) (Baker's yeast).